We begin with the raw amino-acid sequence, 602 residues long: MSRLKRIAGQDPRAGFKEGGRDCGTSVPQGLLKAARKSGQLNLSGRNLSEVPQCVWRINVDIPEEANQNLSFGATERWWEQTDLTKLIISNNKLQSLTDDLRLLPALTVLDIHDNQLTSLPSAIRELQNLQKLNVSHNKLKILPEEITNLRNLKCLYLQHNELTCISEGFEQFSNLEDLDLSNNRLTTVPASFSSLSSLVRLNLSSNELKSLPAEINRMKRLKHLDCNSNLLETIPPELAGMESLELLYLRRNKLRFLPEFPSCSLLKELHVGENQIEMLEAEHLKHLNSILVLDLRDNKLKSVPDEIILLQSLERLDLSNNDISSLPYSLGNLHLKFLALEGNPLRTIRREIINKGTQEVLKYLRSKIKDDGPSQSESATETAMTLPSESRVNIRAIITLKILDYSDKQATLIPDEVFDAVKSNIITSINFSKNQLCEIPKRMVELKEMVSDVNLSFNKLSFISLELCVLQKLTFLDLRNNFLNSLPEEVESLVRLQTINLSFNRFKMLPEVLYRIFTLETILISNNQVGSVDPQKMKMMENLTTLDLQNNDLLQIPPELGNCVNLRTLLLDGNPFRVPRAAILMKGTAGILEYLRDRIPT.

The tract at residues methionine 1–aspartate 22 is disordered. Serine 71 bears the Phosphoserine mark. LRR repeat units lie at residues aspartate 83 to leucine 104, alanine 106 to leucine 127, asparagine 129 to leucine 150, asparagine 152 to phenylalanine 173, asparagine 175 to leucine 196, serine 198 to methionine 219, arginine 221 to methionine 242, serine 244 to serine 265, leucine 266 to lysine 286, serine 290 to leucine 311, serine 313 to histidine 335, leucine 336 to lysine 356, threonine 400 to alanine 421, isoleucine 426 to leucine 447, methionine 450 to glutamine 472, lysine 473 to leucine 494, arginine 496 to isoleucine 517, threonine 519 to methionine 540, asparagine 543 to cysteine 564, and asparagine 566 to methionine 586.

This chain is Leucine-rich repeat-containing protein 40 (LRRC40), found in Pongo abelii (Sumatran orangutan).